A 45-amino-acid polypeptide reads, in one-letter code: Enterotoxin (45 aa).

As to quaternary structure, one of 3 components (of 35, 45 and 105 kDa) of the enterotoxin.

Its function is as follows. One of 3 components required for cytotoxicity (tested in African green monkey Vero cells); the complex is not hemolytic. The sequence is that of Enterotoxin from Bacillus cereus.